Reading from the N-terminus, the 759-residue chain is GTPase-activating protein rrc-1 (759 aa).

The region spanning 164-243 (PAIAAAVVTK…PRDCVMLIDD (80 aa)) is the SH3 domain. The 194-residue stretch at 280–473 (LELTDLYMRT…FFIENSESLF (194 aa)) folds into the Rho-GAP domain. The segment at 591 to 624 (ARSMRPTSRPPPSPRTRRARFSNGSSNNVQKLNE) is disordered. Positions 612 to 622 (SNGSSNNVQKL) are enriched in polar residues.

Expressed in coelomocytes, excretory cells, uterine-seam cells and GLR cells.

Functionally, functions as a GTPase-activating protein (GAP) for ced-10/rac-1 and CDC42. The sequence is that of GTPase-activating protein rrc-1 (rrc-1) from Caenorhabditis elegans.